Consider the following 172-residue polypeptide: MLCPFCSYSDNRVLESRLAEEGESVRRRRECKQCRRRFTTYERIEFVPTVVIKRNGRREAFDRSKVLRGVMIACEKTDVPAELIEQLVDDLQAELQQRSSREVTSAEIGEMVLALLKPLNEVAYVRFASVYRKFKGVADFVSELQTFEANAELDSLKARLERLAAAHDQSAD.

The segment at 3–34 is a zinc-finger region; that stretch reads CPFCSYSDNRVLESRLAEEGESVRRRRECKQC. The 91-residue stretch at 49 to 139 folds into the ATP-cone domain; it reads TVVIKRNGRR…VYRKFKGVAD (91 aa).

This sequence belongs to the NrdR family. Zn(2+) serves as cofactor.

Negatively regulates transcription of bacterial ribonucleotide reductase nrd genes and operons by binding to NrdR-boxes. The sequence is that of Transcriptional repressor NrdR from Gloeobacter violaceus (strain ATCC 29082 / PCC 7421).